Consider the following 597-residue polypeptide: Putative Xaa-Pro dipeptidyl-peptidase (597 aa).

Catalysis depends on charge relay system residues serine 224, aspartate 336, and histidine 367.

The protein belongs to the peptidase S15 family.

The enzyme catalyses Hydrolyzes Xaa-Pro-|- bonds to release unblocked, N-terminal dipeptides from substrates including Ala-Pro-|-p-nitroanilide and (sequentially) Tyr-Pro-|-Phe-Pro-|-Gly-Pro-|-Ile.. The sequence is that of Putative Xaa-Pro dipeptidyl-peptidase from Bacillus anthracis.